A 130-amino-acid polypeptide reads, in one-letter code: Histone H2A type 3 (130 aa).

A disordered region spans residues 1 to 22 (MSGRGKQGGKARAKAKSRSSRA). Position 2 is an N-acetylserine (S2). The residue at position 2 (S2) is a Phosphoserine; by RPS6KA5. A Citrulline; alternate modification is found at R4. A Symmetric dimethylarginine; by PRMT5; alternate modification is found at R4. N6-(2-hydroxyisobutyryl)lysine is present on K6. The span at 7-19 (QGGKARAKAKSRS) shows a compositional bias: basic residues. K10 carries the post-translational modification N6-(2-hydroxyisobutyryl)lysine; alternate. K10 and K14 each carry N6-(beta-hydroxybutyryl)lysine; alternate. K10 bears the N6-lactoyllysine; alternate mark. K10 is subject to N6-succinyllysine; alternate. A Glycyl lysine isopeptide (Lys-Gly) (interchain with G-Cter in ubiquitin); alternate cross-link involves residue K14. Residue K16 forms a Glycyl lysine isopeptide (Lys-Gly) (interchain with G-Cter in ubiquitin) linkage. K37 is modified (N6-(2-hydroxyisobutyryl)lysine; alternate). At K37 the chain carries N6-(beta-hydroxybutyryl)lysine; alternate. At K37 the chain carries N6-crotonyllysine; alternate. An N6-(2-hydroxyisobutyryl)lysine mark is found at K75 and K76. Position 96 is an N6-(2-hydroxyisobutyryl)lysine; alternate (K96). Position 96 is an N6-(beta-hydroxybutyryl)lysine; alternate (K96). Position 96 is an N6-succinyllysine; alternate (K96). K96 is subject to N6-glutaryllysine; alternate. Q105 is modified (N5-methylglutamine). The residue at position 119 (K119) is an N6-(2-hydroxyisobutyryl)lysine; alternate. Residue K119 is modified to N6-(beta-hydroxybutyryl)lysine; alternate. K119 and K120 each carry N6-crotonyllysine; alternate. An N6-glutaryllysine; alternate mark is found at K119 and K120. Residue K120 forms a Glycyl lysine isopeptide (Lys-Gly) (interchain with G-Cter in ubiquitin); alternate linkage. At T121 the chain carries Phosphothreonine; by DCAF1. At K126 the chain carries N6-crotonyllysine; alternate. K126 bears the N6-glutaryllysine; alternate mark.

The protein belongs to the histone H2A family. As to quaternary structure, the nucleosome is a histone octamer containing two molecules each of H2A, H2B, H3 and H4 assembled in one H3-H4 heterotetramer and two H2A-H2B heterodimers. The octamer wraps approximately 147 bp of DNA. In terms of processing, deiminated on Arg-4 in granulocytes upon calcium entry. Post-translationally, monoubiquitination of Lys-120 (H2AK119Ub) by RING1, TRIM37 and RNF2/RING2 complex gives a specific tag for epigenetic transcriptional repression and participates in X chromosome inactivation of female mammals. It is involved in the initiation of both imprinted and random X inactivation. Ubiquitinated H2A is enriched in inactive X chromosome chromatin. Ubiquitination of H2A functions downstream of methylation of 'Lys-27' of histone H3 (H3K27me). H2AK119Ub by RNF2/RING2 can also be induced by ultraviolet and may be involved in DNA repair. Monoubiquitination of Lys-120 (H2AK119Ub) by TRIM37 may promote transformation of cells in a number of breast cancers. Following DNA double-strand breaks (DSBs), it is ubiquitinated through 'Lys-63' linkage of ubiquitin moieties by the E2 ligase UBE2N and the E3 ligases RNF8 and RNF168, leading to the recruitment of repair proteins to sites of DNA damage. Ubiquitination at Lys-14 and Lys-16 (H2AK13Ub and H2AK15Ub, respectively) in response to DNA damage is initiated by RNF168 that mediates monoubiquitination at these 2 sites, and 'Lys-63'-linked ubiquitin are then conjugated to monoubiquitin; RNF8 is able to extend 'Lys-63'-linked ubiquitin chains in vitro. Deubiquitinated by USP51 at Lys-14 and Lys-16 (H2AK13Ub and H2AK15Ub, respectively) after damaged DNA is repaired. H2AK119Ub and ionizing radiation-induced 'Lys-63'-linked ubiquitination (H2AK13Ub and H2AK15Ub) are distinct events. Phosphorylation on Ser-2 (H2AS1ph) is enhanced during mitosis. Phosphorylation on Ser-2 by RPS6KA5/MSK1 directly represses transcription. Acetylation of H3 inhibits Ser-2 phosphorylation by RPS6KA5/MSK1. Phosphorylation at Thr-121 (H2AT120ph) by DCAF1 is present in the regulatory region of many tumor suppresor genes and down-regulates their transcription. In terms of processing, glutamine methylation at Gln-105 (H2AQ104me) by FBL is specifically dedicated to polymerase I. It is present at 35S ribosomal DNA locus and impairs binding of the FACT complex. Post-translationally, symmetric dimethylation on Arg-4 by the PRDM1/PRMT5 complex may play a crucial role in the germ-cell lineage. Crotonylation (Kcr) is specifically present in male germ cells and marks testis-specific genes in post-meiotic cells, including X-linked genes that escape sex chromosome inactivation in haploid cells. Crotonylation marks active promoters and enhancers and confers resistance to transcriptional repressors. It is also associated with post-meiotically activated genes on autosomes. In terms of processing, lactylated in macrophages by EP300/P300 by using lactoyl-CoA directly derived from endogenous or exogenous lactate, leading to stimulates gene transcription.

It localises to the nucleus. Its subcellular location is the chromosome. Functionally, core component of nucleosome. Nucleosomes wrap and compact DNA into chromatin, limiting DNA accessibility to the cellular machineries which require DNA as a template. Histones thereby play a central role in transcription regulation, DNA repair, DNA replication and chromosomal stability. DNA accessibility is regulated via a complex set of post-translational modifications of histones, also called histone code, and nucleosome remodeling. The sequence is that of Histone H2A type 3 from Homo sapiens (Human).